The following is a 396-amino-acid chain: Elongation factor Tu (396 aa).

The tr-type G domain occupies 10-206; the sequence is KPHVNVGTIG…ALDASIPEPK (197 aa). Positions 19 to 26 are G1; sequence GHVDHGKT. GTP is bound at residue 19-26; it reads GHVDHGKT. Thr-26 is a Mg(2+) binding site. The G2 stretch occupies residues 60 to 64; it reads GITIS. Residues 81 to 84 are G3; sequence DCPG. GTP contacts are provided by residues 81 to 85 and 136 to 139; these read DCPGH and NKAD. The segment at 136–139 is G4; that stretch reads NKAD. Residues 174–176 form a G5 region; that stretch reads SAL.

The protein belongs to the TRAFAC class translation factor GTPase superfamily. Classic translation factor GTPase family. EF-Tu/EF-1A subfamily. Monomer.

Its subcellular location is the cytoplasm. It catalyses the reaction GTP + H2O = GDP + phosphate + H(+). Functionally, GTP hydrolase that promotes the GTP-dependent binding of aminoacyl-tRNA to the A-site of ribosomes during protein biosynthesis. This Dichelobacter nodosus (strain VCS1703A) protein is Elongation factor Tu.